The primary structure comprises 153 residues: Mediator of RNA polymerase II transcription subunit 22 (153 aa).

It belongs to the Mediator complex subunit 22 family. In terms of assembly, component of the Mediator complex.

It localises to the nucleus. Functionally, component of the Mediator complex, a coactivator involved in the regulated transcription of nearly all RNA polymerase II-dependent genes. Mediator functions as a bridge to convey information from gene-specific regulatory proteins to the basal RNA polymerase II transcription machinery. Mediator is recruited to promoters by direct interactions with regulatory proteins and serves as a scaffold for the assembly of a functional preinitiation complex with RNA polymerase II and the general transcription factors. This Caenorhabditis briggsae protein is Mediator of RNA polymerase II transcription subunit 22 (mdt-22).